Here is a 219-residue protein sequence, read N- to C-terminus: Transcriptional regulator AcuR (219 aa).

Residues 1 to 25 (MPLTDTPPSVPQKPRRGRPRGAPDA) form a disordered region. In terms of domain architecture, HTH tetR-type spans 26-86 (SLAHQSLIRA…ALIEAYDTYF (61 aa)). A DNA-binding region (H-T-H motif) is located at residues 49 to 68 (GVDEILKAARVPKGSFYHYF).

Functionally, a transcriptional repressor for its operon. Probably binds to 2 operator sequences in the promoter. In Cereibacter sphaeroides (strain ATCC 17023 / DSM 158 / JCM 6121 / CCUG 31486 / LMG 2827 / NBRC 12203 / NCIMB 8253 / ATH 2.4.1.) (Rhodobacter sphaeroides), this protein is Transcriptional regulator AcuR (acuR).